The chain runs to 180 residues: Molybdopterin synthase catalytic subunit (180 aa).

Residues 123 to 124 (HR), K139, and 146 to 148 (KLE) contribute to the substrate site. The segment at 161 to 180 (RDGQKGVKVEGGKEGVEAKH) is disordered.

Belongs to the MoaE family. MOCS2B subfamily. In terms of assembly, heterotetramer; composed of 2 small (MOCS2A) and 2 large (MOCS2B) subunits.

It is found in the cytoplasm. It carries out the reaction 2 [molybdopterin-synthase sulfur-carrier protein]-C-terminal-Gly-aminoethanethioate + cyclic pyranopterin phosphate + H2O = molybdopterin + 2 [molybdopterin-synthase sulfur-carrier protein]-C-terminal Gly-Gly + 2 H(+). The protein operates within cofactor biosynthesis; molybdopterin biosynthesis. Catalytic subunit of the molybdopterin synthase complex, a complex that catalyzes the conversion of precursor Z into molybdopterin. Acts by mediating the incorporation of 2 sulfur atoms from thiocarboxylated MOCS2A into precursor Z to generate a dithiolene group. The polypeptide is Molybdopterin synthase catalytic subunit (Pyrenophora tritici-repentis (strain Pt-1C-BFP) (Wheat tan spot fungus)).